We begin with the raw amino-acid sequence, 460 residues long: Proline--tRNA ligase (460 aa).

This sequence belongs to the class-II aminoacyl-tRNA synthetase family. ProS type 3 subfamily. As to quaternary structure, homodimer.

The protein localises to the cytoplasm. The catalysed reaction is tRNA(Pro) + L-proline + ATP = L-prolyl-tRNA(Pro) + AMP + diphosphate. Functionally, catalyzes the attachment of proline to tRNA(Pro) in a two-step reaction: proline is first activated by ATP to form Pro-AMP and then transferred to the acceptor end of tRNA(Pro). This is Proline--tRNA ligase from Methanococcus maripaludis (strain DSM 14266 / JCM 13030 / NBRC 101832 / S2 / LL).